We begin with the raw amino-acid sequence, 209 residues long: Mitochondrial import inner membrane translocase subunit Tim23 (209 aa).

A run of 3 helical transmembrane segments spans residues 73 to 93, 125 to 145, and 181 to 197; these read FELAFFTIGGCCMTGAAFGAL, ALWANTLGSLALLYSAFGVII, and GLAGLTLTSVYALYNNW.

It belongs to the Tim17/Tim22/Tim23 family. Component of the TIM23 complex at least composed of TIMM23, TIMM17 (TIMM17A or TIMM17B) and TIMM50; within this complex, directly interacts with TIMM50. The complex interacts with the TIMM44 component of the PAM complex and with DNAJC15. Upon mitochondrial depolarization, interacts with PINK1; the interaction is required for PINK1 accumulation at the outer mitochondrial membrane, kinase activation by autophosphorylation and PRKN recruitement to mitochondria.

It localises to the mitochondrion inner membrane. Its function is as follows. Essential component of the TIM23 complex, a complex that mediates the translocation of transit peptide-containing proteins across the mitochondrial inner membrane. Has a role in the activation of stress-induced mitophagy by protecting PINK1 from OMA1-mediated degradation and facilitating its accumulation at the outer mitochondrial membrane in response to depolarization. The polypeptide is Mitochondrial import inner membrane translocase subunit Tim23 (Timm23) (Rattus norvegicus (Rat)).